Consider the following 379-residue polypeptide: Cytochrome b (379 aa).

4 consecutive transmembrane segments (helical) span residues 33–53 (FGSL…FLAM), 77–98 (WTIR…FIHV), 113–133 (WNIG…GYVL), and 178–198 (FFAL…IHLL). His83 and His97 together coordinate heme b. Heme b contacts are provided by His182 and His196. An a ubiquinone-binding site is contributed by His201. 4 consecutive transmembrane segments (helical) span residues 226–246 (TKDF…TLFY), 288–308 (LGGV…PFLQ), 320–340 (LSQF…WIGG), and 347–367 (FISI…FIMP).

The protein belongs to the cytochrome b family. In terms of assembly, the cytochrome bc1 complex contains 11 subunits: 3 respiratory subunits (MT-CYB, CYC1 and UQCRFS1), 2 core proteins (UQCRC1 and UQCRC2) and 6 low-molecular weight proteins (UQCRH/QCR6, UQCRB/QCR7, UQCRQ/QCR8, UQCR10/QCR9, UQCR11/QCR10 and a cleavage product of UQCRFS1). This cytochrome bc1 complex then forms a dimer. It depends on heme b as a cofactor.

Its subcellular location is the mitochondrion inner membrane. In terms of biological role, component of the ubiquinol-cytochrome c reductase complex (complex III or cytochrome b-c1 complex) that is part of the mitochondrial respiratory chain. The b-c1 complex mediates electron transfer from ubiquinol to cytochrome c. Contributes to the generation of a proton gradient across the mitochondrial membrane that is then used for ATP synthesis. The protein is Cytochrome b (MT-CYB) of Lepilemur randrianasoloi (Randrianasoli's sportive lemur).